The sequence spans 468 residues: RUS family member 1 (468 aa).

Alanine 2 is modified (N-acetylalanine). The residue at position 49 (threonine 49) is a Phosphothreonine. The chain crosses the membrane as a helical span at residues 247-267; it reads LLMLPLVSGCPGFSLGCFFFL.

It belongs to the RUS1 family.

It localises to the membrane. The protein is RUS family member 1 (Rusf1) of Pongo abelii (Sumatran orangutan).